The following is a 101-amino-acid chain: NADH-quinone oxidoreductase subunit K (101 aa).

3 helical membrane passes run 4-24 (LSHY…GIFL), 30-50 (IVLL…FIAF), and 61-81 (VFVF…LAIL).

Belongs to the complex I subunit 4L family. In terms of assembly, NDH-1 is composed of 14 different subunits. Subunits NuoA, H, J, K, L, M, N constitute the membrane sector of the complex.

It localises to the cell inner membrane. It carries out the reaction a quinone + NADH + 5 H(+)(in) = a quinol + NAD(+) + 4 H(+)(out). NDH-1 shuttles electrons from NADH, via FMN and iron-sulfur (Fe-S) centers, to quinones in the respiratory chain. The immediate electron acceptor for the enzyme in this species is believed to be ubiquinone. Couples the redox reaction to proton translocation (for every two electrons transferred, four hydrogen ions are translocated across the cytoplasmic membrane), and thus conserves the redox energy in a proton gradient. The sequence is that of NADH-quinone oxidoreductase subunit K from Methylovorus glucosotrophus (strain SIP3-4).